The chain runs to 61 residues: Small ribosomal subunit protein uS14 (61 aa).

Zn(2+) is bound by residues cysteine 24, cysteine 27, cysteine 40, and cysteine 43.

It belongs to the universal ribosomal protein uS14 family. Zinc-binding uS14 subfamily. In terms of assembly, part of the 30S ribosomal subunit. Contacts proteins S3 and S10. Zn(2+) is required as a cofactor.

Binds 16S rRNA, required for the assembly of 30S particles and may also be responsible for determining the conformation of the 16S rRNA at the A site. The protein is Small ribosomal subunit protein uS14 of Borrelia hermsii (strain HS1 / DAH).